The primary structure comprises 801 residues: Mediator of RNA polymerase II transcription subunit 25 (801 aa).

Low complexity-rich tracts occupy residues 647 to 676, 687 to 710, and 722 to 735; these read PQQL…QPGA, PQLR…QQPL, and PHQA…HQAP. Residues 647-735 form a disordered region; that stretch reads PQQLASQAPP…MGQQMQHQAP (89 aa). Residues 689–693 carry the LXXLL motif motif; sequence LRNLL.

The protein belongs to the Mediator complex subunit 25 family. In terms of assembly, component of the Mediator complex.

The protein localises to the nucleus. In terms of biological role, component of the Mediator complex, a coactivator involved in the regulated transcription of nearly all RNA polymerase II-dependent genes. Mediator functions as a bridge to convey information from gene-specific regulatory proteins to the basal RNA polymerase II transcription machinery. Mediator is recruited to promoters by direct interactions with regulatory proteins and serves as a scaffold for the assembly of a functional preinitiation complex with RNA polymerase II and the general transcription factors. The protein is Mediator of RNA polymerase II transcription subunit 25 (med25) of Xenopus laevis (African clawed frog).